A 331-amino-acid polypeptide reads, in one-letter code: Fructose-1,6-bisphosphatase class 1 2 (331 aa).

Mg(2+) contacts are provided by glutamate 80, aspartate 98, leucine 100, and aspartate 101. Substrate is bound by residues 101–104 (DGSS) and asparagine 189. Residue glutamate 261 participates in Mg(2+) binding.

This sequence belongs to the FBPase class 1 family. As to quaternary structure, homotetramer. Requires Mg(2+) as cofactor.

It is found in the cytoplasm. The enzyme catalyses beta-D-fructose 1,6-bisphosphate + H2O = beta-D-fructose 6-phosphate + phosphate. It functions in the pathway carbohydrate biosynthesis; Calvin cycle. The protein is Fructose-1,6-bisphosphatase class 1 2 of Cereibacter sphaeroides (strain ATCC 17023 / DSM 158 / JCM 6121 / CCUG 31486 / LMG 2827 / NBRC 12203 / NCIMB 8253 / ATH 2.4.1.) (Rhodobacter sphaeroides).